A 446-amino-acid polypeptide reads, in one-letter code: Trigger factor (446 aa).

The PPIase FKBP-type domain maps to 161-246; sequence GDRLTIDFKG…VSKVERSELP (86 aa). The disordered stretch occupies residues 422-446; that stretch reads VSYEDAVKPRTAPAEQAEDGEQSAE. A compositionally biased stretch (acidic residues) spans 437–446; sequence QAEDGEQSAE.

It belongs to the FKBP-type PPIase family. Tig subfamily.

Its subcellular location is the cytoplasm. It catalyses the reaction [protein]-peptidylproline (omega=180) = [protein]-peptidylproline (omega=0). Functionally, involved in protein export. Acts as a chaperone by maintaining the newly synthesized protein in an open conformation. Functions as a peptidyl-prolyl cis-trans isomerase. This Hahella chejuensis (strain KCTC 2396) protein is Trigger factor.